The chain runs to 44 residues: MSDKHDKPDISEVTKFDKSKLKKTETHEKNPLPTKETIDQEKQG.

A disordered region spans residues 1–44 (MSDKHDKPDISEVTKFDKSKLKKTETHEKNPLPTKETIDQEKQG). Residue serine 2 is modified to N-acetylserine.

As to expression, expressed in regenerating axons.

It localises to the cytoplasm. The protein localises to the cytoskeleton. Its function is as follows. Plays an important role in the organization of the cytoskeleton. Binds to and sequesters actin monomers (G actin) and therefore inhibits actin polymerization. May be involved in the regulation of structural plasticity in the CNS. This Aplysia californica (California sea hare) protein is Thymosin beta.